A 332-amino-acid polypeptide reads, in one-letter code: Isopentenyl-diphosphate delta-isomerase (332 aa).

Residue 6 to 7 (RK) participates in substrate binding. FMN is bound by residues 65 to 67 (AMT), Ser95, and Asn123. Residue 95 to 97 (SGR) coordinates substrate. Gln157 contacts substrate. Glu158 contacts Mg(2+). Residues Lys187, Thr217, 264-266 (GVY), Ala285, and 285-286 (AR) contribute to the FMN site.

Belongs to the IPP isomerase type 2 family. In terms of assembly, homooctamer. Dimer of tetramers. The cofactor is FMN. NADPH serves as cofactor. Mg(2+) is required as a cofactor.

Its subcellular location is the cytoplasm. It catalyses the reaction isopentenyl diphosphate = dimethylallyl diphosphate. Competitively inhibited by N,N-dimethyl-2-amino-1-ethyl diphosphate (NIPP) and isopentyl diphosphate. In terms of biological role, involved in the biosynthesis of isoprenoids. Catalyzes the 1,3-allylic rearrangement of the homoallylic substrate isopentenyl (IPP) to its allylic isomer, dimethylallyl diphosphate (DMAPP). The sequence is that of Isopentenyl-diphosphate delta-isomerase from Thermus thermophilus (strain ATCC BAA-163 / DSM 7039 / HB27).